The primary structure comprises 177 residues: Large ribosomal subunit protein uL6 (177 aa).

This sequence belongs to the universal ribosomal protein uL6 family. Part of the 50S ribosomal subunit.

Functionally, this protein binds to the 23S rRNA, and is important in its secondary structure. It is located near the subunit interface in the base of the L7/L12 stalk, and near the tRNA binding site of the peptidyltransferase center. The protein is Large ribosomal subunit protein uL6 of Acinetobacter baumannii (strain AB307-0294).